The following is a 785-amino-acid chain: Endonuclease MutS2 (785 aa).

333–340 (GPNTGGKT) lines the ATP pocket. The Smr domain occupies 710 to 785 (LDLRGQRYDE…GNGATIVQLK (76 aa)).

The protein belongs to the DNA mismatch repair MutS family. MutS2 subfamily. Homodimer. Binds to stalled ribosomes, contacting rRNA.

Functionally, endonuclease that is involved in the suppression of homologous recombination and thus may have a key role in the control of bacterial genetic diversity. Its function is as follows. Acts as a ribosome collision sensor, splitting the ribosome into its 2 subunits. Detects stalled/collided 70S ribosomes which it binds and splits by an ATP-hydrolysis driven conformational change. Acts upstream of the ribosome quality control system (RQC), a ribosome-associated complex that mediates the extraction of incompletely synthesized nascent chains from stalled ribosomes and their subsequent degradation. Probably generates substrates for RQC. This Lactobacillus acidophilus (strain ATCC 700396 / NCK56 / N2 / NCFM) protein is Endonuclease MutS2.